A 504-amino-acid polypeptide reads, in one-letter code: Sperm motility kinase 2A (504 aa).

The region spanning 28–276 is the Protein kinase domain; it reads YEMLGTIGHG…VAEVMMHPWV (249 aa). Residues 34–42 and Lys57 each bind ATP; that span reads IGHGGSTKV. Asp147 acts as the Proton acceptor in catalysis. The region spanning 294–334 is the UBA domain; that stretch reads KPDPAIVKAMGHIGFQAQDIEDSLRQRKFNETMASYCLLKK. Composition is skewed to polar residues over residues 376–393 and 443–454; these read PTSL…CGRS and SDESTEGHTSAS. 2 disordered regions span residues 376–403 and 443–469; these read PTSL…RSFS and SDES…PRGI.

This sequence belongs to the protein kinase superfamily. CAMK Ser/Thr protein kinase family. Smok subfamily. Testis-specific. Expressed in the testis from 22 days postpartum (22 dpp).

The enzyme catalyses L-seryl-[protein] + ATP = O-phospho-L-seryl-[protein] + ADP + H(+). The catalysed reaction is L-threonyl-[protein] + ATP = O-phospho-L-threonyl-[protein] + ADP + H(+). May play a role in sperm motility, especially in the regulation of flagellar function. In Mus musculus (Mouse), this protein is Sperm motility kinase 2A (Smok2a).